The primary structure comprises 477 residues: Ribulose bisphosphate carboxylase large chain (477 aa).

The propeptide occupies 1-2 (MS). P3 is modified (N-acetylproline). Substrate contacts are provided by N123 and T173. The active-site Proton acceptor is K175. A substrate-binding site is contributed by K177. Positions 201, 203, and 204 each coordinate Mg(2+). N6-carboxylysine is present on K201. H294 functions as the Proton acceptor in the catalytic mechanism. The substrate site is built by R295, H327, and S379.

It belongs to the RuBisCO large chain family. Type I subfamily. Heterohexadecamer of 8 large chains and 8 small chains; disulfide-linked. The disulfide link is formed within the large subunit homodimers. The cofactor is Mg(2+). The disulfide bond which can form in the large chain dimeric partners within the hexadecamer appears to be associated with oxidative stress and protein turnover.

Its subcellular location is the plastid. The protein resides in the chloroplast. It catalyses the reaction 2 (2R)-3-phosphoglycerate + 2 H(+) = D-ribulose 1,5-bisphosphate + CO2 + H2O. It carries out the reaction D-ribulose 1,5-bisphosphate + O2 = 2-phosphoglycolate + (2R)-3-phosphoglycerate + 2 H(+). RuBisCO catalyzes two reactions: the carboxylation of D-ribulose 1,5-bisphosphate, the primary event in carbon dioxide fixation, as well as the oxidative fragmentation of the pentose substrate in the photorespiration process. Both reactions occur simultaneously and in competition at the same active site. This is Ribulose bisphosphate carboxylase large chain from Lolium perenne (Perennial ryegrass).